Consider the following 370-residue polypeptide: Lysophosphatidic acid receptor 4 (370 aa).

Residues 1–43 (MGDRRFIDFQFQDLNSSLRPRLGNATANNTCIVDDSFKYNLNG) are Extracellular-facing. 3 N-linked (GlcNAc...) asparagine glycosylation sites follow: Asn15, Asn24, and Asn28. A helical membrane pass occupies residues 44-64 (AVYSVVFILGLITNSASLFVF). The Cytoplasmic portion of the chain corresponds to 65–73 (CFRMKMRSE). Residues 74 to 94 (TAIFITNLALSDLLFVCTLPF) form a helical membrane-spanning segment. Over 95–112 (KIFYNFNRHWPFGDTLCK) the chain is Extracellular. A disulfide bridge links Cys111 with Cys188. Residues 113 to 133 (ISGTAFLTNIYGSMLFLTCIS) traverse the membrane as a helical segment. The Cytoplasmic portion of the chain corresponds to 134–155 (VDRFLAIVYPFRSRTIRTRRNS). A helical membrane pass occupies residues 156–176 (AIVCAGVWILVLSGGISASLF). The Extracellular segment spans residues 177–203 (STTNVNNATTTCFEGFSKRVWKTYLSK). N-linked (GlcNAc...) asparagine glycosylation occurs at Asn183. The helical transmembrane segment at 204–224 (ITIFIEVVGFIIPLILNVSCS) threads the bilayer. Residues 225–254 (SVVLRTLRKPATLSQIGTNKKKVLKMITVH) lie on the Cytoplasmic side of the membrane. The helical transmembrane segment at 255-275 (MAVFVVCFVPYNSVLFLYALV) threads the bilayer. The Extracellular portion of the chain corresponds to 276 to 294 (RSQAITNCLLERFAKIMYP). Residues 295–315 (ITLCLATLNCCFDPFIYYFTL) traverse the membrane as a helical segment. The Cytoplasmic segment spans residues 316–370 (ESFQKSFYINTHIRMESLFKTETPLTPKPSLPAIQEEVSDQTTNNGGELMLESTF).

Belongs to the G-protein coupled receptor 1 family.

Its subcellular location is the cell membrane. Functionally, receptor for lysophosphatidic acid (LPA), a mediator of diverse cellular activities. Transduces a signal by increasing the intracellular calcium ions and by stimulating adenylyl cyclase activity. The rank order of potency for agonists of this receptor is 1-oleoyl- &gt; 1-stearoyl- &gt; 1-palmitoyl- &gt; 1-myristoyl- &gt; 1-alkyl- &gt; 1-alkenyl-LPA. The sequence is that of Lysophosphatidic acid receptor 4 (Lpar4) from Mus musculus (Mouse).